The following is a 509-amino-acid chain: Subtelomeric hrmA-associated cluster protein AFUB_078990 (509 aa).

In terms of biological role, part of the subtelomeric hrmA-associated cluster (HAC) containing genes that alter the hyphal surface (such as reduced total chitin or increased beta-glucan exposure) and perturb inter-hyphal interactions within the developing biofilms, resulting in a loss of vertically aligned polarized growing filaments. Consequently, this hypoxia-typic morphotype (called H-MORPH) with altered biofilm architecture leads to increased hypoxia fitness, increased host inflammation, rapid disease progression, and mortality in a murine model of invasive aspergillosis. This is Subtelomeric hrmA-associated cluster protein AFUB_078990 from Aspergillus fumigatus (strain CBS 144.89 / FGSC A1163 / CEA10) (Neosartorya fumigata).